Reading from the N-terminus, the 469-residue chain is MSARKRVKRASAYDLYRTCKQAGTCPPDVIPKVEGDTIADKILKFGGLAIYLGGLGIGTWSTGRVAAGGSPRYTPLRTAGSTSSLASIGSRAVTAGTRPSIGAGIPLDTLETLGALRPGVYEDTVLPEAPAIVTPDAVPADSGLDALSIGTDSSTETLITLLEPEGPEDIAVLELQPLDRPTWQVSNAVHQSSAYHAPLQLQSSIAETSGLENIFVGGSGLGDTGGENIELTYFGSPRTSTPRSIASKSRGILNWFSKRYYTQVPTEDPEVFSSQTFANPLYEAEPAVLKGPSGRVGLSQVYKPDTLTTRSGTEVGPQLHVRYSLSTIHEDVEAIPYTVDENTQGLAFVPLHEEQAGFEEIELDDFSETHRLLPQNTSSTPVGSGVRRSLIPTQEFSATRPTGVVTYGSPDTYSASPVTDPDSTSPSLVIDDTTTTPIIIIDGHTVDLYSSNYTLHPSLLRKRKKRKHA.

Residues 1–10 (MSARKRVKRA) carry the Nuclear localization signal motif. Cys19 and Cys25 are joined by a disulfide. A disordered region spans residues 401 to 429 (PTGVVTYGSPDTYSASPVTDPDSTSPSLV). Positions 414–429 (SASPVTDPDSTSPSLV) are enriched in low complexity. The Nuclear localization signal motif lies at 461 to 468 (RKRKKRKH).

This sequence belongs to the papillomaviridae L2 protein family. Interacts with major capsid protein L1. Interacts with E2; this interaction inhibits E2 transcriptional activity but not the DNA replication function E2. Interacts with host GADD45GIP1. Interacts with host HSPA8; this interaction is required for L2 nuclear translocation. Interacts with host importins KPNB2 and KPNB3. Forms a complex with importin alpha2-beta1 heterodimers via interaction with the importin alpha2 adapter. Interacts with host DYNLT1; this interaction is essential for virus intracellular transport during entry. Interacts (via C-terminus) with host retromer subunits VPS35 and VPS29. Post-translationally, highly phosphorylated.

It is found in the virion. The protein resides in the host nucleus. Its subcellular location is the host early endosome. It localises to the host Golgi apparatus. In terms of biological role, minor protein of the capsid that localizes along the inner surface of the virion, within the central cavities beneath the L1 pentamers. Plays a role in capsid stabilization through interaction with the major capsid protein L1. Once the virion enters the host cell, L2 escorts the genomic DNA into the nucleus by promoting escape from the endosomal compartments and traffic through the host Golgi network. Mechanistically, the C-terminus of L2 possesses a cell-penetrating peptide that protudes from the host endosome, interacts with host cytoplasmic retromer cargo and thereby mediates the capsid delivery to the host trans-Golgi network. Plays a role through its interaction with host dynein in the intracellular microtubule-dependent transport of viral capsid toward the nucleus. Mediates the viral genome import into the nucleus through binding to host importins. Once within the nucleus, L2 localizes viral genomes to host PML bodies in order to activate early gene expression for establishment of infection. Later on, promotes late gene expression by interacting with the viral E2 protein and by inhibiting its transcriptional activation functions. During virion assembly, encapsidates the genome by direct interaction with the viral DNA. This chain is Minor capsid protein L2, found in Bovine papillomavirus type 1.